Here is a 144-residue protein sequence, read N- to C-terminus: 3-hydroxyacyl-[acyl-carrier-protein] dehydratase FabZ (144 aa).

Residue His48 is part of the active site.

This sequence belongs to the thioester dehydratase family. FabZ subfamily.

It localises to the cytoplasm. The enzyme catalyses a (3R)-hydroxyacyl-[ACP] = a (2E)-enoyl-[ACP] + H2O. Its function is as follows. Involved in unsaturated fatty acids biosynthesis. Catalyzes the dehydration of short chain beta-hydroxyacyl-ACPs and long chain saturated and unsaturated beta-hydroxyacyl-ACPs. This is 3-hydroxyacyl-[acyl-carrier-protein] dehydratase FabZ from Bacillus pumilus (strain SAFR-032).